We begin with the raw amino-acid sequence, 66 residues long: Large ribosomal subunit protein bL33 (66 aa).

Belongs to the bacterial ribosomal protein bL33 family.

The polypeptide is Large ribosomal subunit protein bL33 (Wolbachia pipientis subsp. Culex pipiens (strain wPip)).